A 294-amino-acid chain; its full sequence is MSDDPSTNDALGTLRAAIKQAVTDVRGQTPLAQSFTNFVTINLVANAQLAAGGTAAMSYLPDDVIATAEIAGSNYINVGTLLPFFKNALPEIARKLHENGKTWVLDPVAAGIGETRTAILESFRDVPPTIVRGNASEIIALDAMWGLADADSTTPATRPAGVEAVDEVDAAVDAAKRLARHLAKRSPVGAGAVAVSGAVDLVTDGERTFRLPGGSAMMTKITGAGCSLGGVTATYLAVAEPLVAALAASLLYDRASEIAEVKSDGPGSFQVALLDALWNVTADQVAASDIIETN.

M57 contacts substrate. ATP-binding residues include R132 and S196. Residue G223 participates in substrate binding.

This sequence belongs to the Thz kinase family. The cofactor is Mg(2+).

The enzyme catalyses 5-(2-hydroxyethyl)-4-methylthiazole + ATP = 4-methyl-5-(2-phosphooxyethyl)-thiazole + ADP + H(+). Its pathway is cofactor biosynthesis; thiamine diphosphate biosynthesis; 4-methyl-5-(2-phosphoethyl)-thiazole from 5-(2-hydroxyethyl)-4-methylthiazole: step 1/1. Its function is as follows. Catalyzes the phosphorylation of the hydroxyl group of 4-methyl-5-beta-hydroxyethylthiazole (THZ). This Bifidobacterium adolescentis (strain ATCC 15703 / DSM 20083 / NCTC 11814 / E194a) protein is Hydroxyethylthiazole kinase.